A 315-amino-acid polypeptide reads, in one-letter code: Protein FRA10AC1 homolog (315 aa).

Position 1 is an N-acetylmethionine (Met1). Positions 1-28 are disordered; the sequence is MHGHGGYDSDFSDDEQGGGSSKKRKKTV. 2 positions are modified to phosphoserine: Ser9 and Ser12. Lys36 carries the post-translational modification N6-acetyllysine. Positions 225-235 are enriched in basic residues; sequence KEIKSTKKRSK. Residues 225 to 308 are disordered; it reads KEIKSTKKRS…EKSQEEEFDD (84 aa). Positions 236 to 245 are enriched in basic and acidic residues; the sequence is TKTESDESPH. Phosphoserine is present on residues Ser251 and Ser252. Residues 257–279 show a composition bias toward basic and acidic residues; sequence SQGKDEGHSSSKRSEDSRNRNAG. Residues Ser283 and Ser285 each carry the phosphoserine modification.

Interacts with ESS2.

It localises to the nucleus. Its function is as follows. May be involved in pre-mRNA splicing. This chain is Protein FRA10AC1 homolog (Fra10ac1), found in Rattus norvegicus (Rat).